The sequence spans 89 residues: Small ribosomal subunit protein bS18 (89 aa).

Belongs to the bacterial ribosomal protein bS18 family. As to quaternary structure, part of the 30S ribosomal subunit. Forms a tight heterodimer with protein bS6.

Its function is as follows. Binds as a heterodimer with protein bS6 to the central domain of the 16S rRNA, where it helps stabilize the platform of the 30S subunit. The polypeptide is Small ribosomal subunit protein bS18 (Parabacteroides distasonis (strain ATCC 8503 / DSM 20701 / CIP 104284 / JCM 5825 / NCTC 11152)).